Consider the following 570-residue polypeptide: Phosphocholine hydrolase Lem3 (570 aa).

The protein localises to the secreted. Its subcellular location is the host cytoplasm. The catalysed reaction is [Rab1 protein]-O-phosphocholine-L-serine + H2O = [Rab1 protein]-L-serine + phosphocholine + H(+). Its function is as follows. Virulence effector that plays a role in hijacking the host vesicular trafficking by recruiting the small guanosine triphosphatase (GTPase) Rab1 to the cytosolic face of the Legionella-containing vacuole (LCVs). Acts as a phosphocholine hydrolase by mediating the hydrolysis of phosphocholine to Ser residues of host RAB1 (RAB1A, RAB1B or RAB1C). Dephosphocholination of target proteins restores accessibility to GTPase effector LepB. Can act on both GDP-bound and GTP-bound Rab proteins. This is Phosphocholine hydrolase Lem3 (lem3) from Legionella pneumophila subsp. pneumophila (strain Philadelphia 1 / ATCC 33152 / DSM 7513).